We begin with the raw amino-acid sequence, 160 residues long: Bacterial microcompartment shell protein PduK (160 aa).

The region spanning Ser-11 to Thr-96 is the BMC domain.

This sequence belongs to the bacterial microcompartments protein family. In terms of assembly, interacts with shell proteins PduA and PduP and assembly protein PduM. It depends on Fe cation as a cofactor.

Its subcellular location is the bacterial microcompartment. Its pathway is polyol metabolism; 1,2-propanediol degradation. In terms of biological role, a minor shell protein of the bacterial microcompartment (BMC) dedicated to 1,2-propanediol (1,2-PD) degradation. The isolated BMC shell component protein ratio for J:A:B':B:K:T:U is approximately 15:10:7:6:1:1:2. Not required for structural integrity of BMCs nor to mitigate propionaldehyde toxicity, it might be involved in spatial organization of BMCs. The 1,2-PD-specific bacterial microcompartment (BMC) concentrates low levels of 1,2-PD catabolic enzymes, concentrates volatile reaction intermediates thus enhancing pathway flux and keeps the level of toxic, mutagenic propionaldehyde low. This chain is Bacterial microcompartment shell protein PduK, found in Salmonella typhimurium (strain LT2 / SGSC1412 / ATCC 700720).